The following is a 657-amino-acid chain: uncharacterized protein (657 aa).

S114 is modified (phosphoserine). 5 disordered regions span residues 142–216, 228–248, 291–312, 335–354, and 399–522; these read LASQ…SDEE, SSRE…EEEE, STRS…SHTP, SSPG…EGAD, and AEAS…SGRH. The segment covering 143-169 has biased composition (polar residues); it reads ASQNTDKTSQNQARELPVTENNAQNAK. Residues 190 to 206 show a composition bias toward basic and acidic residues; sequence AGKERTLQTPKQKEPAR. At S213 the chain carries Phosphoserine. 2 stretches are compositionally biased toward polar residues: residues 234–243 and 301–312; these read TNQGFSSANV and SHVSSDTASHTP. A compositionally biased stretch (acidic residues) spans 343–354; the sequence is ETVDEPVSEGAD. Residues 437-451 are compositionally biased toward low complexity; that stretch reads SASSASAIQQDSTSS. Positions 462–484 are enriched in polar residues; that stretch reads NTVSSAYSEDFENSPSLTASEPT. A compositionally biased stretch (basic and acidic residues) spans 485-495; that stretch reads AHSKESLDRTL. Polar residues predominate over residues 499–513; that stretch reads SESSSSVKTDLPQTA.

This is an uncharacterized protein from Homo sapiens (Human).